The primary structure comprises 153 residues: Nascent polypeptide-associated complex subunit beta (153 aa).

Disordered regions lie at residues M1 to K40 and L126 to E153. Residues T23–P32 are compositionally biased toward basic residues. Positions G36–V101 constitute an NAC-A/B domain. Residues E132–E147 are compositionally biased toward acidic residues.

It belongs to the NAC-beta family. Part of the nascent polypeptide-associated complex (NAC), consisting of EGD2 and EGD1. NAC associates with ribosomes via EGD1.

The protein resides in the cytoplasm. It localises to the nucleus. Functionally, component of the nascent polypeptide-associated complex (NAC), a dynamic component of the ribosomal exit tunnel, protecting the emerging polypeptides from interaction with other cytoplasmic proteins to ensure appropriate nascent protein targeting. The NAC complex also promotes mitochondrial protein import by enhancing productive ribosome interactions with the outer mitochondrial membrane and blocks the inappropriate interaction of ribosomes translating non-secretory nascent polypeptides with translocation sites in the membrane of the endoplasmic reticulum. EGD1 may act as a transcription factor that exert a negative effect on the expression of several genes that are transcribed by RNA polymerase II. This chain is Nascent polypeptide-associated complex subunit beta (EGD1), found in Gibberella zeae (strain ATCC MYA-4620 / CBS 123657 / FGSC 9075 / NRRL 31084 / PH-1) (Wheat head blight fungus).